The chain runs to 212 residues: SOSS complex subunit B1 (212 aa).

A DNA-binding region (OB) is located at residues 22-92 (IVLETGRVTK…TLYTGRGGDL (71 aa)). The disordered stretch occupies residues 110-212 (EPNPEYNTQQ…GKETRRSSKR (103 aa)). Residues 114-130 (EYNTQQAPNKSVQNNDN) are compositionally biased toward polar residues. At Thr-117 the chain carries Phosphothreonine; by ATM. A compositionally biased stretch (low complexity) spans 131–148 (SPTAPQATTGPPAASPAS). Residues 149–160 (ENQNGNGLSTQL) show a composition bias toward polar residues. Residues 166 to 178 (PHPSHTPSHPPST) show a composition bias toward low complexity.

The protein belongs to the SOSS-B family. SOSS-B1 subfamily. As to quaternary structure, component of the SOSS complex, composed of SOSS-B (SOSS-B1/NABP2 or SOSS-B2/NABP1), SOSS-A/INTS3 and SOSS-C/INIP. SOSS complexes containing SOSS-B1/NABP2 are more abundant than complexes containing SOSS-B2/NABP1. Directly interacts with ATM, SOSS-A/INTS3 and RAD51. Interacts with INTS7. Post-translationally, phosphorylated by ATM in response to DNA damage. Phosphorylation prevents degradation by the proteasome, hence stabilization of the protein and accumulation within cells. Ubiquitinated in a FBXL5-dependent manner, leading to proteasomal degradation.

It localises to the nucleus. Component of the SOSS complex, a multiprotein complex that functions downstream of the MRN complex to promote DNA repair and G2/M checkpoint. In the SOSS complex, acts as a sensor of single-stranded DNA that binds to single-stranded DNA, in particular to polypyrimidines. The SOSS complex associates with DNA lesions and influences diverse endpoints in the cellular DNA damage response including cell-cycle checkpoint activation, recombinational repair and maintenance of genomic stability. Required for efficient homologous recombination-dependent repair of double-strand breaks (DSBs) and ATM-dependent signaling pathways. The protein is SOSS complex subunit B1 (Nabp2) of Mus musculus (Mouse).